The primary structure comprises 171 residues: ATP synthase subunit b (171 aa).

The chain crosses the membrane as a helical span at residues 12 to 34; sequence FALNLNLFETNVINLAVVAFGLY.

Belongs to the ATPase B chain family. As to quaternary structure, F-type ATPases have 2 components, F(1) - the catalytic core - and F(0) - the membrane proton channel. F(1) has five subunits: alpha(3), beta(3), gamma(1), delta(1), epsilon(1). F(0) has four main subunits: a(1), b(1), b'(1) and c(10-14). The alpha and beta chains form an alternating ring which encloses part of the gamma chain. F(1) is attached to F(0) by a central stalk formed by the gamma and epsilon chains, while a peripheral stalk is formed by the delta, b and b' chains.

It is found in the cellular thylakoid membrane. In terms of biological role, f(1)F(0) ATP synthase produces ATP from ADP in the presence of a proton or sodium gradient. F-type ATPases consist of two structural domains, F(1) containing the extramembraneous catalytic core and F(0) containing the membrane proton channel, linked together by a central stalk and a peripheral stalk. During catalysis, ATP synthesis in the catalytic domain of F(1) is coupled via a rotary mechanism of the central stalk subunits to proton translocation. Component of the F(0) channel, it forms part of the peripheral stalk, linking F(1) to F(0). This Prochlorococcus marinus (strain SARG / CCMP1375 / SS120) protein is ATP synthase subunit b.